We begin with the raw amino-acid sequence, 721 residues long: Mitogen-activated protein kinase 6 (721 aa).

The 297-residue stretch at 20–316 (YMDLKPLGCG…AEEALSHPYM (297 aa)) folds into the Protein kinase domain. ATP contacts are provided by residues 26–34 (LGCGGNGLV) and K49. Catalysis depends on D152, which acts as the Proton acceptor. The residue at position 626 (T626) is a Phosphothreonine. The TXY signature appears at 626 to 628 (TSY). Position 628 is a phosphotyrosine (Y628).

It belongs to the protein kinase superfamily. CMGC Ser/Thr protein kinase family. MAP kinase subfamily. Mg(2+) serves as cofactor. Post-translationally, dually phosphorylated on Thr-626 and Tyr-628, which activates the enzyme.

The catalysed reaction is L-seryl-[protein] + ATP = O-phospho-L-seryl-[protein] + ADP + H(+). The enzyme catalyses L-threonyl-[protein] + ATP = O-phospho-L-threonyl-[protein] + ADP + H(+). Activated by threonine and tyrosine phosphorylation. Phosphorylates microtubule-associated protein 2 (MAP2). May promote entry in the cell cycle. This Gallus gallus (Chicken) protein is Mitogen-activated protein kinase 6 (MAPK6).